The primary structure comprises 207 residues: Small ribosomal subunit protein uS4c (207 aa).

The 62-residue stretch at 92-153 folds into the S4 RNA-binding domain; that stretch reads MRLDNILFRL…PKIYQSIITK (62 aa).

The protein belongs to the universal ribosomal protein uS4 family. In terms of assembly, part of the 30S ribosomal subunit. Contacts protein S5. The interaction surface between S4 and S5 is involved in control of translational fidelity.

It is found in the plastid. It localises to the chloroplast. Functionally, one of the primary rRNA binding proteins, it binds directly to 16S rRNA where it nucleates assembly of the body of the 30S subunit. In terms of biological role, with S5 and S12 plays an important role in translational accuracy. In Equisetum bogotense (Horsetail), this protein is Small ribosomal subunit protein uS4c (rps4).